The sequence spans 258 residues: Acyl-[acyl-carrier-protein]--UDP-N-acetylglucosamine O-acyltransferase (258 aa).

This sequence belongs to the transferase hexapeptide repeat family. LpxA subfamily. Homotrimer.

The protein resides in the cytoplasm. The catalysed reaction is a (3R)-hydroxyacyl-[ACP] + UDP-N-acetyl-alpha-D-glucosamine = a UDP-3-O-[(3R)-3-hydroxyacyl]-N-acetyl-alpha-D-glucosamine + holo-[ACP]. It participates in glycolipid biosynthesis; lipid IV(A) biosynthesis; lipid IV(A) from (3R)-3-hydroxytetradecanoyl-[acyl-carrier-protein] and UDP-N-acetyl-alpha-D-glucosamine: step 1/6. Involved in the biosynthesis of lipid A, a phosphorylated glycolipid that anchors the lipopolysaccharide to the outer membrane of the cell. The polypeptide is Acyl-[acyl-carrier-protein]--UDP-N-acetylglucosamine O-acyltransferase (Neisseria meningitidis serogroup A / serotype 4A (strain DSM 15465 / Z2491)).